The chain runs to 157 residues: Ribosomal RNA large subunit methyltransferase H (157 aa).

S-adenosyl-L-methionine contacts are provided by residues Leu-75, Gly-106, and 125–130 (FSELTF).

It belongs to the RNA methyltransferase RlmH family. As to quaternary structure, homodimer.

Its subcellular location is the cytoplasm. It catalyses the reaction pseudouridine(1915) in 23S rRNA + S-adenosyl-L-methionine = N(3)-methylpseudouridine(1915) in 23S rRNA + S-adenosyl-L-homocysteine + H(+). In terms of biological role, specifically methylates the pseudouridine at position 1915 (m3Psi1915) in 23S rRNA. In Malacoplasma penetrans (strain HF-2) (Mycoplasma penetrans), this protein is Ribosomal RNA large subunit methyltransferase H.